The sequence spans 215 residues: 3-demethoxyubiquinol 3-hydroxylase (215 aa).

Positions 64, 94, 97, 146, 178, and 181 each coordinate Fe cation.

It belongs to the COQ7 family. It depends on Fe cation as a cofactor.

It is found in the cell membrane. It carries out the reaction a 5-methoxy-2-methyl-3-(all-trans-polyprenyl)benzene-1,4-diol + AH2 + O2 = a 3-demethylubiquinol + A + H2O. Its pathway is cofactor biosynthesis; ubiquinone biosynthesis. Functionally, catalyzes the hydroxylation of 2-nonaprenyl-3-methyl-6-methoxy-1,4-benzoquinol during ubiquinone biosynthesis. The protein is 3-demethoxyubiquinol 3-hydroxylase of Pseudomonas aeruginosa (strain LESB58).